The primary structure comprises 614 residues: Threonine--tRNA ligase (614 aa).

Residues 1–138 form an editing domain region; sequence MRILTIHARK…PLSELSKTIR (138 aa). 2 catalytic regions span residues 195 to 492 and 196 to 492; these read NRVN…PYIP and RVND…PYIP. Zn(2+)-binding residues include Cys-289, His-340, and His-461.

The protein belongs to the class-II aminoacyl-tRNA synthetase family. As to quaternary structure, homodimer. Zn(2+) serves as cofactor.

The protein resides in the cytoplasm. It catalyses the reaction tRNA(Thr) + L-threonine + ATP = L-threonyl-tRNA(Thr) + AMP + diphosphate + H(+). Catalyzes the attachment of threonine to tRNA(Thr) in a two-step reaction: L-threonine is first activated by ATP to form Thr-AMP and then transferred to the acceptor end of tRNA(Thr). Also edits incorrectly charged L-seryl-tRNA(Thr). The sequence is that of Threonine--tRNA ligase from Staphylothermus marinus (strain ATCC 43588 / DSM 3639 / JCM 9404 / F1).